We begin with the raw amino-acid sequence, 491 residues long: Nucleoporin NUP42 (491 aa).

Residues 1-25 form a C3H1-type zinc finger; it reads MAICNFFLQGRCRYGEKCWNEHPRG. 2 disordered regions span residues 23–82 and 92–111; these read PRGG…SQRY and TTWINRDSEKPSAGSFSGFG. The span at 33–64 shows a compositional bias: polar residues; it reads RYQSQNRYQEQSRYQEQSRYPEQSRYPEQNRY. FG repeat units lie at residues 110–111, 259–260, 302–303, 312–313, 333–334, 342–343, 363–364, 375–376, 379–380, and 410–411; these read FG.

Probable component of the nuclear pore complex (NPC).

The protein localises to the nucleus. The protein resides in the nuclear pore complex. It is found in the nucleus membrane. In terms of biological role, required for the export of mRNAs containing poly(A) tails from the nucleus into the cytoplasm. The protein is Nucleoporin NUP42 (nup42) of Xenopus laevis (African clawed frog).